The chain runs to 87 residues: Colicin-E7 immunity protein (87 aa).

Belongs to the colicins ColE2/ColE8/ColE9 and pyocins S1/S2 family.

This protein is able to protect a cell, which harbors the plasmid ColE7 encoding colicin E7, against colicin E7, it binds specifically to the DNase-type colicin and inhibits its bactericidal activity. Dimeric ImmE7 may possess a RNase activity that cleaves its own mRNA at a specific site and thus autoregulates translational expression of the downstream ceiE7 gene as well as degradation of the upstream ceaE7 mRNA. The protein is Colicin-E7 immunity protein (imm) of Escherichia coli.